The chain runs to 205 residues: Methylthioribulose-1-phosphate dehydratase (205 aa).

2 residues coordinate Zn(2+): H94 and H96.

Belongs to the aldolase class II family. MtnB subfamily. The cofactor is Zn(2+).

The catalysed reaction is 5-(methylsulfanyl)-D-ribulose 1-phosphate = 5-methylsulfanyl-2,3-dioxopentyl phosphate + H2O. Its pathway is amino-acid biosynthesis; L-methionine biosynthesis via salvage pathway; L-methionine from S-methyl-5-thio-alpha-D-ribose 1-phosphate: step 2/6. Catalyzes the dehydration of methylthioribulose-1-phosphate (MTRu-1-P) into 2,3-diketo-5-methylthiopentyl-1-phosphate (DK-MTP-1-P). This chain is Methylthioribulose-1-phosphate dehydratase, found in Pectobacterium carotovorum subsp. carotovorum (strain PC1).